Reading from the N-terminus, the 953-residue chain is Translation initiation factor IF-2 (953 aa).

Disordered regions lie at residues 48–248 (SSFS…AELA) and 279–363 (TKLK…TERK). Basic and acidic residues-rich tracts occupy residues 80 to 89 (TGSEHAEKTQ), 98 to 111 (FKAE…EQAA), and 140 to 188 (QGDK…ENHK). Residues 191–207 (RFTNQKKQGRQEPQSKS) are compositionally biased toward polar residues. Residues 229 to 248 (RQSETRFRAQQEAKRLAELA) show a composition bias toward basic and acidic residues. A compositionally biased stretch (polar residues) spans 282 to 291 (KSSNISAKST). Residues 300–317 (ARPEKNRELTHHSQEGQK) show a composition bias toward basic and acidic residues. Positions 322–338 (SWNSQNQVRNQKNSNWN) are enriched in low complexity. Over residues 339 to 348 (KNKKTKKGKN) the composition is skewed to basic residues. Residues 454–623 (ERAPVVTIMG…LLVAEVEELK (170 aa)) form the tr-type G domain. Positions 463-470 (GHVDHGKT) are G1. 463–470 (GHVDHGKT) contacts GTP. The segment at 488 to 492 (GITQH) is G2. The interval 509–512 (DTPG) is G3. GTP contacts are provided by residues 509–513 (DTPGH) and 563–566 (NKID). Positions 563 to 566 (NKID) are G4. A G5 region spans residues 599 to 601 (SAK).

Belongs to the TRAFAC class translation factor GTPase superfamily. Classic translation factor GTPase family. IF-2 subfamily.

The protein resides in the cytoplasm. In terms of biological role, one of the essential components for the initiation of protein synthesis. Protects formylmethionyl-tRNA from spontaneous hydrolysis and promotes its binding to the 30S ribosomal subunits. Also involved in the hydrolysis of GTP during the formation of the 70S ribosomal complex. The protein is Translation initiation factor IF-2 of Streptococcus pyogenes serotype M18 (strain MGAS8232).